A 278-amino-acid polypeptide reads, in one-letter code: Phosphatidylglycerol--prolipoprotein diacylglyceryl transferase (278 aa).

4 consecutive transmembrane segments (helical) span residues Trp19–Gly39, Phe49–Val69, Ile83–Val103, and Met112–Ile132. Arg134 provides a ligand contact to a 1,2-diacyl-sn-glycero-3-phospho-(1'-sn-glycerol). 3 helical membrane passes run Gln174 to Leu194, Gly204 to Met224, and Ile235 to Tyr255.

This sequence belongs to the Lgt family.

It is found in the cell membrane. The catalysed reaction is L-cysteinyl-[prolipoprotein] + a 1,2-diacyl-sn-glycero-3-phospho-(1'-sn-glycerol) = an S-1,2-diacyl-sn-glyceryl-L-cysteinyl-[prolipoprotein] + sn-glycerol 1-phosphate + H(+). Its pathway is protein modification; lipoprotein biosynthesis (diacylglyceryl transfer). Catalyzes the transfer of the diacylglyceryl group from phosphatidylglycerol to the sulfhydryl group of the N-terminal cysteine of a prolipoprotein, the first step in the formation of mature lipoproteins. This is Phosphatidylglycerol--prolipoprotein diacylglyceryl transferase from Lactobacillus gasseri (strain ATCC 33323 / DSM 20243 / BCRC 14619 / CIP 102991 / JCM 1131 / KCTC 3163 / NCIMB 11718 / NCTC 13722 / AM63).